A 262-amino-acid polypeptide reads, in one-letter code: Phosphatidylglycerol--prolipoprotein diacylglyceryl transferase 1 (262 aa).

4 helical membrane passes run 15-35 (WYGI…SINA), 40-60 (LNFD…IIGA), 83-103 (QGGL…FIYC), and 108-128 (VDFL…QGIG). Arginine 129 contacts a 1,2-diacyl-sn-glycero-3-phospho-(1'-sn-glycerol). Transmembrane regions (helical) follow at residues 169-189 (TFLY…IILY), 197-217 (GVVI…IEGL), and 229-249 (VAQL…IIIV).

The protein belongs to the Lgt family.

The protein resides in the cell membrane. The enzyme catalyses L-cysteinyl-[prolipoprotein] + a 1,2-diacyl-sn-glycero-3-phospho-(1'-sn-glycerol) = an S-1,2-diacyl-sn-glyceryl-L-cysteinyl-[prolipoprotein] + sn-glycerol 1-phosphate + H(+). The protein operates within protein modification; lipoprotein biosynthesis (diacylglyceryl transfer). In terms of biological role, catalyzes the transfer of the diacylglyceryl group from phosphatidylglycerol to the sulfhydryl group of the N-terminal cysteine of a prolipoprotein, the first step in the formation of mature lipoproteins. The protein is Phosphatidylglycerol--prolipoprotein diacylglyceryl transferase 1 of Clostridium perfringens (strain 13 / Type A).